The sequence spans 164 residues: Ribosome maturation factor RimM (164 aa).

Residues 90–161 (KGSYFIADLI…TVTIKPLEIW (72 aa)) form the PRC barrel domain.

This sequence belongs to the RimM family. As to quaternary structure, binds ribosomal protein uS19.

The protein localises to the cytoplasm. An accessory protein needed during the final step in the assembly of 30S ribosomal subunit, possibly for assembly of the head region. Essential for efficient processing of 16S rRNA. May be needed both before and after RbfA during the maturation of 16S rRNA. It has affinity for free ribosomal 30S subunits but not for 70S ribosomes. In Clostridium botulinum (strain Langeland / NCTC 10281 / Type F), this protein is Ribosome maturation factor RimM.